The primary structure comprises 410 residues: Aspartate aminotransferase (410 aa).

Residues Gly-47, Trp-135, and Asn-185 each coordinate L-aspartate. Position 249 is an N6-(pyridoxal phosphate)lysine (Lys-249). Arg-385 is an L-aspartate binding site.

Belongs to the class-I pyridoxal-phosphate-dependent aminotransferase family. As to quaternary structure, homodimer. It depends on pyridoxal 5'-phosphate as a cofactor.

The protein resides in the cytoplasm. It catalyses the reaction L-aspartate + 2-oxoglutarate = oxaloacetate + L-glutamate. In terms of biological role, catalyzes the reversible conversion of aspartate and 2-oxoglutarate to glutamate and oxaloacetate. The chain is Aspartate aminotransferase from Rhizobium meliloti (Ensifer meliloti).